A 206-amino-acid chain; its full sequence is Thymidylate kinase (206 aa).

Residue 7–14 participates in ATP binding; that stretch reads GGEGSGKS.

The protein belongs to the thymidylate kinase family.

The enzyme catalyses dTMP + ATP = dTDP + ADP. Functionally, phosphorylation of dTMP to form dTDP in both de novo and salvage pathways of dTTP synthesis. This chain is Thymidylate kinase (tmk), found in Chlamydia pneumoniae (Chlamydophila pneumoniae).